Consider the following 374-residue polypeptide: Putative glutamate--cysteine ligase 2 (374 aa).

Belongs to the glutamate--cysteine ligase type 2 family. YbdK subfamily.

It catalyses the reaction L-cysteine + L-glutamate + ATP = gamma-L-glutamyl-L-cysteine + ADP + phosphate + H(+). In terms of biological role, ATP-dependent carboxylate-amine ligase which exhibits weak glutamate--cysteine ligase activity. In Laribacter hongkongensis (strain HLHK9), this protein is Putative glutamate--cysteine ligase 2.